A 208-amino-acid chain; its full sequence is Probable GTP-binding protein EngB (208 aa).

An EngB-type G domain is found at 23-205; that stretch reads LTSEMVILGR…RQTLLKYLLT (183 aa). GTP-binding positions include 31–38, 57–61, 84–87, 154–157, and 182–184; these read GRSNVGKS, GKTRL, DLPG, TKFD, and FNA. Mg(2+)-binding residues include S38 and T59.

It belongs to the TRAFAC class TrmE-Era-EngA-EngB-Septin-like GTPase superfamily. EngB GTPase family. Requires Mg(2+) as cofactor.

Functionally, necessary for normal cell division and for the maintenance of normal septation. In Helicobacter pylori (strain Shi470), this protein is Probable GTP-binding protein EngB.